A 716-amino-acid polypeptide reads, in one-letter code: Mitochondrial Rho GTPase 1 (716 aa).

Over 1-692 (MSPDAIRVVV…VSVDQDDIKH (692 aa)) the chain is Cytoplasmic. Residues 3 to 224 (PDAIRVVVCG…FYLCQRAVTH (222 aa)) form the Miro 1 domain. Residues 58-99 (NDQDHHHHHQSSPSTMKNKRKHNNKRERERERESSINNVQPN) are disordered. GTP-binding positions include 84-91 (ERERERES), 113-115 (DTS), and 167-170 (NKSD). In terms of domain architecture, EF-hand 1 spans 240–275 (GAIKPLKRIFWLSDTDQDGYLNFEELSELHKKCFGI). Positions 253, 255, 257, 259, and 264 each coordinate Ca(2+). Positions 303–327 (TQTPPQQQHLATSAGTPNGTTTTTS) are disordered. In terms of domain architecture, EF-hand 2 spans 388–423 (TGYKFFVDLFIKFDKDNDGGLNEDELNTLFRSTPGI). Residues aspartate 401, aspartate 403, aspartate 405, and glutamate 412 each contribute to the Ca(2+) site. Residues 505 to 671 (RNVFNCFIVG…FIQLVDAAKT (167 aa)) enclose the Miro 2 domain. GTP is bound by residues 514-521 (GAPKAGKS), 550-554 (ELRGG), and 620-623 (LKAD). Residues 693–713 (IIMTGAAIAVVGLVSIWVLNS) form a helical; Anchor for type IV membrane protein membrane-spanning segment. The Mitochondrial intermembrane portion of the chain corresponds to 714–716 (LRR).

Belongs to the mitochondrial Rho GTPase family.

It localises to the mitochondrion outer membrane. Its function is as follows. Mitochondrial GTPase involved in mitochondrial trafficking. Probably involved in control of anterograde transport of mitochondria and their subcellular distribution. This is Mitochondrial Rho GTPase 1 (GEM1) from Candida albicans (strain SC5314 / ATCC MYA-2876) (Yeast).